A 152-amino-acid polypeptide reads, in one-letter code: SKP1-like protein 11 (152 aa).

Residues 94-152 (ILAANYLNIKSLLDLTCQTVADMIKGKTPEEIRSTFNIENDFTPEEEEAVRKENQWAFE) form an interaction with the F-box domain of F-box proteins region.

This sequence belongs to the SKP1 family. As to quaternary structure, part of a SCF (SKP1-cullin-F-box) protein ligase complex. Interacts with ADO3/FKF1, COI1/FBL2, EBF1/FBL6, PP2A13, PP2B10, UFO, SKIP2, SKIP15, SKIP16, SKIP32, CPR1/CPR30, At1g55000, At1g67340, At1g78100, At3g04660, At3g16740, At3g61590, At4g38940 and At5g49610. Expressed in young seedlings, cotyledons, roots, leaves, floral stems, inflorescences, pollen, and siliques, with a slightly higher level in inflorescence than in other tissues.

It is found in the nucleus. It participates in protein modification; protein ubiquitination. Involved in ubiquitination and subsequent proteasomal degradation of target proteins. Together with CUL1, RBX1 and a F-box protein, it forms a SCF E3 ubiquitin ligase complex. The functional specificity of this complex depends on the type of F-box protein. In the SCF complex, it serves as an adapter that links the F-box protein to CUL1. Plays a role during early flowers reproductive development. This chain is SKP1-like protein 11 (ASK11), found in Arabidopsis thaliana (Mouse-ear cress).